Consider the following 370-residue polypeptide: Putative F-box protein At3g10430 (370 aa).

The 47-residue stretch at 1-47 (MGSSLPFDLILEILQRTPAESLLRFKSTCKKWYELISNDKRFMYKHL) folds into the F-box domain.

This Arabidopsis thaliana (Mouse-ear cress) protein is Putative F-box protein At3g10430.